Reading from the N-terminus, the 865-residue chain is Anaphase-promoting complex subunit 2 (865 aa).

The protein belongs to the cullin family. In terms of assembly, the APC/C is composed of at least 10 subunits. Interacts with APC8, APC11, CDC27A and CDC27B. In terms of tissue distribution, highly expressed in immature flowers. Expressed in stems, leaves and flowers.

Its subcellular location is the nucleus. It participates in protein modification; protein ubiquitination. Component of the anaphase promoting complex/cyclosome (APC/C), a cell cycle-regulated E3 ubiquitin-protein ligase complex that controls progression through mitosis and the G1 phase of the cell cycle. The APC/C complex controls several key steps in the cell cycle by mediating ubiquitination and subsequent degradation of target proteins such as cyclins. The APC/C complex is required for the female gametophyte development and is involved in several aspect of development by controlling cell division and cell elongation. Involved in the control of endoreduplication. This Arabidopsis thaliana (Mouse-ear cress) protein is Anaphase-promoting complex subunit 2 (APC2).